The following is a 184-amino-acid chain: Protein FAM89A (184 aa).

The interval Tyr148–Ile184 is disordered. Basic and acidic residues predominate over residues Ser154–Pro164. Positions Leu167–Ile184 are enriched in low complexity.

Belongs to the FAM89 family.

This Homo sapiens (Human) protein is Protein FAM89A (FAM89A).